The sequence spans 278 residues: ATP-dependent dethiobiotin synthetase BioD 1 (278 aa).

51–56 (NVGKTI) contacts ATP. Residue Thr55 participates in Mg(2+) binding. Lys76 is an active-site residue. Asp102 contributes to the ATP binding site. Mg(2+)-binding residues include Asp102 and Glu163. ATP-binding positions include 223-224 (NR) and 252-254 (PYI).

It belongs to the dethiobiotin synthetase family. As to quaternary structure, homodimer. The cofactor is Mg(2+).

Its subcellular location is the cytoplasm. It catalyses the reaction (7R,8S)-7,8-diammoniononanoate + CO2 + ATP = (4R,5S)-dethiobiotin + ADP + phosphate + 3 H(+). The protein operates within cofactor biosynthesis; biotin biosynthesis; biotin from 7,8-diaminononanoate: step 1/2. Functionally, catalyzes a mechanistically unusual reaction, the ATP-dependent insertion of CO2 between the N7 and N8 nitrogen atoms of 7,8-diaminopelargonic acid (DAPA, also called 7,8-diammoniononanoate) to form a ureido ring. This is ATP-dependent dethiobiotin synthetase BioD 1 from Haemophilus ducreyi (strain 35000HP / ATCC 700724).